We begin with the raw amino-acid sequence, 951 residues long: Bromodomain-containing protein 8 (951 aa).

Lysine 85 carries the N6-acetyllysine modification. The stretch at 97–171 (VRKLTAERVE…ATDAAYQARQ (75 aa)) forms a coiled coil. A disordered region spans residues 161 to 273 (KATDAAYQAR…TPPPSPLLSE (113 aa)). Polar residues predominate over residues 204–226 (TPTTMEEATSGVTPGTLPSTPVT). 2 positions are modified to phosphoserine: serine 456 and serine 460. Residues 520–547 (EENDDPQSLPGPWEHPIQQERDKPVPLP) are disordered. Residue lysine 542 forms a Glycyl lysine isopeptide (Lys-Gly) (interchain with G-Cter in SUMO2) linkage. Lysine 554 is modified (N6-acetyllysine; alternate). A Glycyl lysine isopeptide (Lys-Gly) (interchain with G-Cter in SUMO1); alternate cross-link involves residue lysine 554. A Glycyl lysine isopeptide (Lys-Gly) (interchain with G-Cter in SUMO2); alternate cross-link involves residue lysine 554. A Glycyl lysine isopeptide (Lys-Gly) (interchain with G-Cter in SUMO2) cross-link involves residue lysine 582. The tract at residues 584 to 745 (EPTEPEPGMS…PVSESDDGFS (162 aa)) is disordered. Positions 610 to 622 (PELRSQDSDEEPR) are enriched in basic and acidic residues. Lysine 648 participates in a covalent cross-link: Glycyl lysine isopeptide (Lys-Gly) (interchain with G-Cter in SUMO2). The residue at position 652 (serine 652) is a Phosphoserine. A compositionally biased stretch (basic and acidic residues) spans 673 to 688 (ETQHKFEMSDSLKEES). A Glycyl lysine isopeptide (Lys-Gly) (interchain with G-Cter in SUMO2) cross-link involves residue lysine 685. A phosphoserine mark is found at serine 694, serine 710, and serine 714. The Bromo domain occupies 779–884 (IQAQKIWKKA…RDVLEQIQQF (106 aa)). The segment at 900–922 (AKSLRGRDSTRKQDASEKDSVPM) is disordered. A compositionally biased stretch (basic and acidic residues) spans 904 to 919 (RGRDSTRKQDASEKDS).

As to quaternary structure, component of the NuA4 histone acetyltransferase complex which contains the catalytic subunit KAT5/TIP60 and the subunits EP400, TRRAP/PAF400, BRD8/SMAP, EPC1, DMAP1/DNMAP1, RUVBL1/TIP49, RUVBL2, ING3, actin, ACTL6A/BAF53A, MORF4L1/MRG15, MORF4L2/MRGX, MRGBP, YEATS4/GAS41, VPS72/YL1 and MEAF6. Component of a NuA4-related complex which contains EP400, TRRAP/PAF400, SRCAP, BRD8/SMAP, EPC1, DMAP1/DNMAP1, RUVBL1/TIP49, RUVBL2, actin, ACTL6A/BAF53A, VPS72 and YEATS4/GAS41. BRD8 isoform 2 interacts with RXRA/NR2B1 and THRB/ERBA2. Component of a SWR1-like complex.

Its subcellular location is the nucleus. Its function is as follows. May act as a coactivator during transcriptional activation by hormone-activated nuclear receptors (NR). Stimulates transcriptional activation by AR/DHTR, ESR1/NR3A1, RXRA/NR2B1 and THRB/ERBA2. Component of the NuA4 histone acetyltransferase (HAT) complex which is involved in transcriptional activation of select genes principally by acetylation of nucleosomal histones H4 and H2A. This modification may both alter nucleosome - DNA interactions and promote interaction of the modified histones with other proteins which positively regulate transcription. This complex may be required for the activation of transcriptional programs associated with oncogene and proto-oncogene mediated growth induction, tumor suppressor mediated growth arrest and replicative senescence, apoptosis, and DNA repair. NuA4 may also play a direct role in DNA repair when recruited to sites of DNA damage. Component of a SWR1-like complex that specifically mediates the removal of histone H2A.Z/H2AZ1 from the nucleosome. The polypeptide is Bromodomain-containing protein 8 (Brd8) (Mus musculus (Mouse)).